The sequence spans 375 residues: Probable UDP-N-acetylglucosamine 2-epimerase (375 aa).

It belongs to the UDP-N-acetylglucosamine 2-epimerase family.

The protein resides in the cytoplasm. The catalysed reaction is UDP-N-acetyl-alpha-D-glucosamine = UDP-N-acetyl-alpha-D-mannosamine. It participates in glycan metabolism; exopolysaccharide EPS I biosynthesis. May be involved in synthesis of N-acetyltrideoxygalactose, a component of exopolysaccharide EPS I which functions as a virulence factor. The chain is Probable UDP-N-acetylglucosamine 2-epimerase (epsC) from Ralstonia nicotianae (strain ATCC BAA-1114 / GMI1000) (Ralstonia solanacearum).